The primary structure comprises 144 residues: Large ribosomal subunit protein uL16 (144 aa).

Belongs to the universal ribosomal protein uL16 family. As to quaternary structure, part of the 50S ribosomal subunit.

In terms of biological role, binds 23S rRNA and is also seen to make contacts with the A and possibly P site tRNAs. In Levilactobacillus brevis (strain ATCC 367 / BCRC 12310 / CIP 105137 / JCM 1170 / LMG 11437 / NCIMB 947 / NCTC 947) (Lactobacillus brevis), this protein is Large ribosomal subunit protein uL16.